Reading from the N-terminus, the 953-residue chain is Coatomer subunit beta (953 aa).

The residue at position 2 (threonine 2) is an N-acetylthreonine. HEAT repeat units lie at residues 96 to 131 (HEMI…KEAE), 132 to 168 (LLEP…NFEH), 240 to 276 (SERA…SAPT), 277 to 314 (AIKA…HPAH), 316 to 353 (RVLQ…SRNV), and 396 to 433 (DMAA…RFDN). Lysine 494 is modified (N6-acetyllysine).

As to quaternary structure, oligomeric complex that consists of at least the alpha, beta, beta', gamma, delta, epsilon and zeta subunits. Interacts with CAPN8 and PRKCE. Interacts with SCYL1. Interacts with COPG1. Interacts with ARF1 (myristoylated); this interaction is required for binding of COPB1 to Golgi membranes. Interacts (via trunk domain) with ARF1 (via switch I region); the interaction is direct. Interacts with KCNK2 (via N-terminus); this interaction increases the channel-mediated whole cell currents and promotes plasma membrane expression of KCNK2. Interacts with STX17. Interacts with TMEM115. Interacts with TMEM41B. High expression in the lung, kidney, skeletal muscle and small intestine, and lower level of expression in heart, liver, spleen, stomach and fat.

The protein resides in the cytoplasm. The protein localises to the golgi apparatus membrane. It localises to the cytoplasmic vesicle. It is found in the COPI-coated vesicle membrane. Its subcellular location is the cell membrane. The protein resides in the endoplasmic reticulum-Golgi intermediate compartment. The coatomer is a cytosolic protein complex that binds to dilysine motifs and reversibly associates with Golgi non-clathrin-coated vesicles, which further mediate biosynthetic protein transport from the ER, via the Golgi up to the trans Golgi network. Coatomer complex is required for budding from Golgi membranes, and is essential for the retrograde Golgi-to-ER transport of dilysine-tagged proteins. In mammals, the coatomer can only be recruited by membranes associated to ADP-ribosylation factors (ARFs), which are small GTP-binding proteins; the complex also influences the Golgi structural integrity, as well as the processing, activity, and endocytic recycling of LDL receptors. Plays a functional role in facilitating the transport of kappa-type opioid receptor mRNAs into axons and enhances translation of these proteins. Required for limiting lipid storage in lipid droplets. Involved in lipid homeostasis by regulating the presence of perilipin family members PLIN2 and PLIN3 at the lipid droplet surface and promoting the association of adipocyte surface triglyceride lipase (PNPLA2) with the lipid droplet to mediate lipolysis. Involved in the Golgi disassembly and reassembly processes during cell cycle. Involved in autophagy by playing a role in early endosome function. Plays a role in organellar compartmentalization of secretory compartments including endoplasmic reticulum (ER)-Golgi intermediate compartment (ERGIC), Golgi, trans-Golgi network (TGN) and recycling endosomes, and in biosynthetic transport of CAV1. This Sus scrofa (Pig) protein is Coatomer subunit beta.